We begin with the raw amino-acid sequence, 148 residues long: Deoxyuridine 5'-triphosphate nucleotidohydrolase (148 aa).

Substrate contacts are provided by residues 67–69, Asn80, 84–86, and Met94; these read RSG and LID.

The protein belongs to the dUTPase family. Requires Mg(2+) as cofactor.

The catalysed reaction is dUTP + H2O = dUMP + diphosphate + H(+). The protein operates within pyrimidine metabolism; dUMP biosynthesis; dUMP from dCTP (dUTP route): step 2/2. In terms of biological role, this enzyme is involved in nucleotide metabolism: it produces dUMP, the immediate precursor of thymidine nucleotides and it decreases the intracellular concentration of dUTP so that uracil cannot be incorporated into DNA. The sequence is that of Deoxyuridine 5'-triphosphate nucleotidohydrolase from Burkholderia mallei (strain NCTC 10247).